Here is a 53-residue protein sequence, read N- to C-terminus: Rubredoxin (53 aa).

One can recognise a Rubredoxin-like domain in the interval Met-1–Ala-53. Fe cation is bound by residues Cys-6, Cys-9, Cys-39, and Cys-42.

This sequence belongs to the rubredoxin family. Fe(3+) serves as cofactor.

Its function is as follows. Rubredoxin is a small nonheme, iron protein lacking acid-labile sulfide. Its single Fe, chelated to 4 Cys, functions as an electron acceptor and may also stabilize the conformation of the molecule. This is Rubredoxin from Butyribacterium methylotrophicum.